We begin with the raw amino-acid sequence, 332 residues long: Anthranilate phosphoribosyltransferase (332 aa).

5-phospho-alpha-D-ribose 1-diphosphate-binding positions include G79, G82–D83, T87, N89–T92, K107–S115, and S119. G79 contributes to the anthranilate binding site. S91 lines the Mg(2+) pocket. N110 contributes to the anthranilate binding site. Residue R165 coordinates anthranilate. Mg(2+) contacts are provided by D223 and E224.

It belongs to the anthranilate phosphoribosyltransferase family. As to quaternary structure, homodimer. It depends on Mg(2+) as a cofactor.

The catalysed reaction is N-(5-phospho-beta-D-ribosyl)anthranilate + diphosphate = 5-phospho-alpha-D-ribose 1-diphosphate + anthranilate. It functions in the pathway amino-acid biosynthesis; L-tryptophan biosynthesis; L-tryptophan from chorismate: step 2/5. Its function is as follows. Catalyzes the transfer of the phosphoribosyl group of 5-phosphorylribose-1-pyrophosphate (PRPP) to anthranilate to yield N-(5'-phosphoribosyl)-anthranilate (PRA). This chain is Anthranilate phosphoribosyltransferase, found in Vibrio cholerae serotype O1 (strain ATCC 39541 / Classical Ogawa 395 / O395).